A 312-amino-acid chain; its full sequence is E3 ubiquitin-protein ligase RNF126-B (312 aa).

Zn(2+) is bound by residues C13, C16, C29, and C32. The C4-type zinc-finger motif lies at 13-32; that stretch reads CHSCTAEITPRLPEYTCPRC. 2 disordered regions span residues 41-63 and 96-139; these read PETSRNSESNSSNNSGTDQNRPS and GTSG…RNEG. The span at 44-55 shows a compositional bias: low complexity; that stretch reads SRNSESNSSNNS. Over residues 102-115 the composition is skewed to basic and acidic residues; that stretch reads EETRDGESRREHQS. Over residues 124–134 the composition is skewed to basic residues; the sequence is PRARMSTRRGA. The segment at 228–269 adopts an RING-type zinc-finger fold; sequence CPVCKEDYTVGESVRQLPCNHLFHNDCIIPWLEQHDTCPVCR. Residues 275 to 312 form a disordered region; sequence QNTATNPPGLTDMTFSSSSTSSSSSTSPTDENNTANNS. Residues 290 to 301 are compositionally biased toward low complexity; that stretch reads SSSSTSSSSSTS. A compositionally biased stretch (polar residues) spans 302-312; that stretch reads PTDENNTANNS.

The protein localises to the cytoplasm. The protein resides in the nucleus. It carries out the reaction S-ubiquitinyl-[E2 ubiquitin-conjugating enzyme]-L-cysteine + [acceptor protein]-L-lysine = [E2 ubiquitin-conjugating enzyme]-L-cysteine + N(6)-ubiquitinyl-[acceptor protein]-L-lysine.. Its pathway is protein modification; protein ubiquitination. E3 ubiquitin-protein ligase that mediates ubiquitination oF target proteins. Depending on the associated E2 ligase, mediates 'Lys-27'-, 'Lys-29'-, 'Lys-48'- and/or 'Lys-63'-linked polyubiquitination of substrates. Part of a BAG6-dependent quality control process ensuring that proteins of the secretory pathway that are mislocalized to the cytosol are degraded by the proteasome. Probably acts by providing the ubiquitin ligase activity associated with the BAG6 complex and be responsible for ubiquitination of the hydrophobic mislocalized proteins and their targeting to the proteasome. This is E3 ubiquitin-protein ligase RNF126-B from Xenopus laevis (African clawed frog).